Consider the following 444-residue polypeptide: Phosphoribosylamine--glycine ligase (444 aa).

In terms of domain architecture, ATP-grasp spans 109-324 (RNLFKKYEID…FLDVCFAIAE (216 aa)). 140-202 (MTSLGKDVVV…EEKLVGVEFT (63 aa)) lines the ATP pocket. Residues Gln282, Glu294, and Asn296 each coordinate Mg(2+). The Mn(2+) site is built by Gln282, Glu294, and Asn296.

This sequence belongs to the GARS family. The cofactor is Mg(2+). Mn(2+) serves as cofactor.

The enzyme catalyses 5-phospho-beta-D-ribosylamine + glycine + ATP = N(1)-(5-phospho-beta-D-ribosyl)glycinamide + ADP + phosphate + H(+). Its pathway is purine metabolism; IMP biosynthesis via de novo pathway; N(1)-(5-phospho-D-ribosyl)glycinamide from 5-phospho-alpha-D-ribose 1-diphosphate: step 2/2. This Methanococcus maripaludis (strain C7 / ATCC BAA-1331) protein is Phosphoribosylamine--glycine ligase.